The sequence spans 258 residues: MAKNAPAPRGARRKPVKKVGVPLRERVATAVPWMLVGSVAMVSLLAVIYLPAALDGYPIRKVGVDGVTDVRRQQQIETALAALVREENYFSVPLEEIYQQSQGLSWVEEVSVRRQWPDTVVLTVEERRPVAVWNESVLVSDSGQPFKALKQYDLDDLPHLNGPEQRLEEVMGFYHSMGKTLADVDLSIRSMEVNARLTARLTLNNDMELVVDREHYTTKLRRFVRLYRGVLNTDSRQVARVDLRYADGMAVTWREQQS.

Topologically, residues 1–29 are cytoplasmic; the sequence is MAKNAPAPRGARRKPVKKVGVPLRERVAT. The helical transmembrane segment at 30–50 threads the bilayer; that stretch reads AVPWMLVGSVAMVSLLAVIYL. The Periplasmic segment spans residues 51-258; it reads PAALDGYPIR…MAVTWREQQS (208 aa). The 71-residue stretch at 57-127 folds into the POTRA domain; the sequence is YPIRKVGVDG…DTVVLTVEER (71 aa).

It belongs to the FtsQ/DivIB family. FtsQ subfamily. As to quaternary structure, part of a complex composed of FtsB, FtsL and FtsQ.

It is found in the cell inner membrane. In terms of biological role, essential cell division protein. May link together the upstream cell division proteins, which are predominantly cytoplasmic, with the downstream cell division proteins, which are predominantly periplasmic. May control correct divisome assembly. The sequence is that of Cell division protein FtsQ from Alcanivorax borkumensis (strain ATCC 700651 / DSM 11573 / NCIMB 13689 / SK2).